We begin with the raw amino-acid sequence, 207 residues long: LexA repressor (207 aa).

Positions 28-48 (VREIGEAVGLASSSTVHGHLS) form a DNA-binding region, H-T-H motif. Residues serine 130 and lysine 168 each act as for autocatalytic cleavage activity in the active site.

It belongs to the peptidase S24 family. Homodimer.

The catalysed reaction is Hydrolysis of Ala-|-Gly bond in repressor LexA.. Functionally, represses a number of genes involved in the response to DNA damage (SOS response), including recA and lexA. In the presence of single-stranded DNA, RecA interacts with LexA causing an autocatalytic cleavage which disrupts the DNA-binding part of LexA, leading to derepression of the SOS regulon and eventually DNA repair. The sequence is that of LexA repressor from Staphylococcus carnosus (strain TM300).